A 214-amino-acid polypeptide reads, in one-letter code: Response regulator GacA (214 aa).

Residues 3-119 (KVLVVDDHDL…EMVQAIRQVF (117 aa)) form the Response regulatory domain. Asp-54 carries the 4-aspartylphosphate modification. The 66-residue stretch at 143 to 208 (HDSPFDSLSE…ELALLAVRHG (66 aa)) folds into the HTH luxR-type domain. Residues 167–186 (VQSISDKLCLSPKTVNTYRY) constitute a DNA-binding region (H-T-H motif).

Positively controls the production of the autoinducer N-butyryl-homoserine lactone and the formation of the virulence factors pyocyanine, cyanide, and lipase. The polypeptide is Response regulator GacA (gacA) (Pseudomonas aeruginosa (strain ATCC 15692 / DSM 22644 / CIP 104116 / JCM 14847 / LMG 12228 / 1C / PRS 101 / PAO1)).